The chain runs to 519 residues: Cell adhesion molecule CEACAM1 (519 aa).

The first 34 residues, 1–34 (MELASARLLRGQIPWRGLLLTASLLTYWSPLTTA), serve as a signal peptide directing secretion. Gln35 is modified (pyrrolidone carboxylic acid). The Extracellular portion of the chain corresponds to 35 to 425 (QVTVDAVPPN…QGNSGLSEGA (391 aa)). The required for homophilic binding stretch occupies residues 39–142 (DAVPPNVVEE…QTSVQFRVYP (104 aa)). Positions 42 to 140 (PPNVVEEKSV…PIQTSVQFRV (99 aa)) constitute an Ig-like V-type domain. N-linked (GlcNAc...) asparagine glycans are attached at residues Asn87, Asn104, Asn113, Asn148, Asn152, Asn173, Asn197, Asn224, Asn256, Asn288, Asn292, Asn302, Asn315, and Asn331. Ig-like C2-type domains are found at residues 147-232 (PNVT…FNLD), 237-317 (PDAP…KNIT), and 325-403 (PSIQ…FRIS). Residues Cys167 and Cys215 are joined by a disulfide bond. Cys259 and Cys299 form a disulfide bridge. A disulfide bridge connects residues Cys344 and Cys392. N-linked (GlcNAc...) asparagine; atypical glycosylation occurs at Asn374. A helical membrane pass occupies residues 426–446 (IAGIVIGSVAGVALIAALAYF). The tract at residues 445 to 457 (YFLYSRKTGGGSD) is interaction with calmodulin. Over 447-519 (LYSRKTGGGS…ETVYSVVKKK (73 aa)) the chain is Cytoplasmic. Positions 447–519 (LYSRKTGGGS…ETVYSVVKKK (73 aa)) are interaction with FLNA. Positions 455–519 (GSDHRDLTEH…ETVYSVVKKK (65 aa)) are disordered. Residues 456–466 (SDHRDLTEHKP) show a composition bias toward basic and acidic residues. Residues 484 to 519 (DDVSYSVLNFNAQQSKRPTSASSSPTETVYSVVKKK) form a required for interaction with PTPN11 and PTPN6 and for control of phosphorylation level region. Tyr488 is subject to Phosphotyrosine; by SRC, LCK, INSR and EGFR. A compositionally biased stretch (polar residues) spans 489 to 512 (SVLNFNAQQSKRPTSASSSPTETV). Position 503 is a phosphoserine (Ser503). Phosphotyrosine; by INSR, SRC and LCK is present on Tyr513. Residues 513–516 (YSVV) are essential for interaction with PTPN11 and PTPN6.

This sequence belongs to the immunoglobulin superfamily. CEA family. In terms of assembly, monomer. Oligomer. Heterodimer. Homodimer. Cis-dimer/oligomer (via Ig-like C2-type and/or via cytoplasmic domains); induced by trans-homophilic cell adhesion through an allosteric mechanism transmitted by the Ig-like V-type domain, and is regulated by intracellular calcium and calmodulin. Interacts (via cytoplasmic domain) with calmodulin in a calcium dependent manner; reduces homophilic cell adhesion through dissociation of dimer. Isoform 1 interacts (via cytoplasmic domain) with PTPN11 (preferentially) and PTPN6; cis-homodimer form is preferred; this interaction is decreased by formation of isoform 1 / isoform 2 cis-heterodimers and is dependent on the monomer/dimer equilibrium; this interaction is phosphorylation-dependent. Isoform 1 interacts with LYN. Isoform 1 interacts (via cytoplasmic domain) with SRC (via SH2 domain); this interaction is regulated by trans-homophilic cell adhesion. Isoform 1 interacts (via cytoplasmic domain) with LCK; mediates phosphorylation at Tyr-488 and Tyr-513 resulting in PTPN6 association. Isoform 1 interacts with PTPN6; this interaction is phosphorylation-dependent and causes a profound decrease in TCR stimulation-induced CD247 and ZAP70 phosphorylation. Isoform 1 interacts with TCR/CD3 complex through TCR beta chain and CD3E; colocalizes at the cell surface and upon stimulation of the TCR/CD3 complex recruits PTPN6 in the TCR/CD3 complex, resulting in dephosphorylation of CD247 and ZAP70. Isoform 1 interacts (via cytoplasmic domain) with SHC1 (via SH2 domain); SHC1 mediates interaction with INSR or EGFR in a Ser-503 phosphorylation-dependent manner. Isoform 1 interacts with EGFR; the interaction is indirect. Isoform 1 interacts with CSF3R; down-regulates the CSF3R-STAT3 pathway through recruitment of PTPN6 that dephosphorylates CSF3R. Isoform 1 (phosphorylated form) interacts with TLR4 and SYK; recruits PTPN6 that dephosphorylates SYK, reducing the production of reactive oxygen species (ROS) and lysosome disruption, leading to a reduction of the inflammasome activity. Isoform 1 interacts with FLNA; inhibits cell migration and cell scattering by interfering with the interaction of FLNA with RALA. Isoform 1 interacts (via cytoplasmic domain) with PXN; the interaction is phosphotyrosyl-dependent. Isoform 1 interacts with KLRK1; recruits PTPN6 that dephosphorylates VAV1. Isoform 1 interacts with CEACAM8. Isoform 1 interacts with FASN; this interaction is insulin and phosphorylation-dependent; reduces fatty-acid synthase activity. Interacts (via Ig-like V-type) with HAVCR2 (via Ig-like V-type); facilitates the maturation and cell surface expression of HAVCR2 thereby regulating T-cell tolerance induction. Isoform 2 interacts (via the cytoplasmic domain) with ANXA2; this interaction is regulated by phosphorylation and appears in the AIIt complex. Interacts (via Lewis X moieties) with CD209 (via C-type lectin domain); this interaction is regulated by the glycosylation pattern of CEACAM1 on cell types and regulates contact between dendritic cells and neutrophils. Phosphorylated on serine and tyrosine. Isoform 1 is phosphorylated on tyrosine by Src family kinases like SRC and LCK and by receptor like CSF3R, EGFR and INSR upon stimulation. Phosphorylated at Ser-503; mediates activity. Phosphorylated at Tyr-488; regulates activity. Phosphorylated at Tyr-488 by EGFR and INSR upon stimulation; this phosphorylation is Ser-503-phosphorylation-dependent; mediates cellular internalization; increases interaction with FASN. Phosphorylated at Tyr-488 and Tyr-513 by LCK; mediates PTPN6 association and is regulated by homophilic ligation of CEACAM1 in the absence of T-cell activation. Phosphorylated at Tyr-513; mediates interaction with PTPN11. In terms of processing, phosphorylated on serine and threonine. Expressed in epithelia, vessel endothelia, leukocytes and platelets. Isoform 1 and isoform 2 are highly expressed in liver and intestine, moderately in lung, and weakly in muscle, kidney, and spleen. Expressed in granulocytes, lymphocytes, granulocytes, B cells, and T-cells.

The protein localises to the cell membrane. It is found in the lateral cell membrane. It localises to the apical cell membrane. The protein resides in the basal cell membrane. Its subcellular location is the cell junction. The protein localises to the adherens junction. It is found in the cytoplasmic vesicle. It localises to the secretory vesicle. The protein resides in the cell projection. Its subcellular location is the microvillus membrane. Its function is as follows. Cell adhesion protein that mediates homophilic cell adhesion in a calcium-independent manner. Plays a role as coinhibitory receptor in immune response, insulin action and also functions as an activator during angiogenesis. Its coinhibitory receptor function is phosphorylation- and PTPN6 -dependent, which in turn, suppress signal transduction of associated receptors by dephosphorylation of their downstream effectors. Plays a role in immune response, of T-cells, natural killer (NK) and neutrophils. Upon TCR/CD3 complex stimulation, inhibits TCR-mediated cytotoxicity by blocking granule exocytosis by mediating homophilic binding to adjacent cells, allowing interaction with and phosphorylation by LCK and interaction with the TCR/CD3 complex which recruits PTPN6 resulting in dephosphorylation of CD247 and ZAP70. Also inhibits T-cell proliferation and cytokine production through inhibition of JNK cascade and plays a crucial role in regulating autoimmunity and anti-tumor immunity by inhibiting T-cell through its interaction with HAVCR2. Upon natural killer (NK) cells activation, inhibit KLRK1-mediated cytolysis of CEACAM1-bearing tumor cells by trans-homophilic interactions with CEACAM1 on the target cell and lead to cis-interaction between CEACAM1 and KLRK1, allowing PTPN6 recruitment and then VAV1 dephosphorylation. Upon neutrophils activation negatively regulates IL1B production by recruiting PTPN6 to a SYK-TLR4-CEACAM1 complex, that dephosphorylates SYK, reducing the production of reactive oxygen species (ROS) and lysosome disruption, which in turn, reduces the activity of the inflammasome. Down-regulates neutrophil production by acting as a coinhibitory receptor for CSF3R by downregulating the CSF3R-STAT3 pathway through recruitment of PTPN6 that dephosphorylates CSF3R. Also regulates insulin action by promoting INS clearance and regulating lipogenesis in liver through regulating insulin signaling. Upon INS stimulation, undergoes phosphorylation by INSR leading to INS clearance by increasing receptor-mediated insulin endocytosis. This inernalization promotes interaction with FASN leading to receptor-mediated insulin degradation and to reduction of FASN activity leading to negative regulation of fatty acid synthesis. INSR-mediated phosphorylation also provokes a down-regulation of cell proliferation through SHC1 interaction resulting in decrease coupling of SHC1 to the MAPK3/ERK1-MAPK1/ERK2 and phosphatidylinositol 3-kinase pathways. Functions as activator in angiogenesis by promoting blood vessel remodeling through endothelial cell differentiation and migration and in arteriogenesis by increasing the number of collateral arteries and collateral vessel calibers after ischemia. Also regulates vascular permeability through the VEGFR2 signaling pathway resulting in control of nitric oxide production. Down-regulates cell growth in response to EGF through its interaction with SHC1 that mediates interaction with EGFR resulting in decrease coupling of SHC1 to the MAPK3/ERK1-MAPK1/ERK2 pathway. Negatively regulates platelet aggregation by decreasing platelet adhesion on type I collagen through the GPVI-FcRgamma complex. Inhibits cell migration and cell scattering through interaction with FLNA; interferes with the interaction of FLNA with RALA. Mediates bile acid transport activity in a phosphorylation dependent manner. Negatively regulates osteoclastogenesis. In terms of biological role, cell adhesion proteins that mediates homophilic cell adhesion in a calcium-independent manner. Promotes populations of T-cells regulating IgA production and secretion associated with control of the commensal microbiota and resistance to enteropathogens. The polypeptide is Cell adhesion molecule CEACAM1 (Rattus norvegicus (Rat)).